A 78-amino-acid chain; its full sequence is Translational regulator CsrA (78 aa).

The protein belongs to the CsrA/RsmA family. In terms of assembly, homodimer; the beta-strands of each monomer intercalate to form a hydrophobic core, while the alpha-helices form wings that extend away from the core.

It localises to the cytoplasm. Its function is as follows. A translational regulator that binds mRNA to regulate translation initiation and/or mRNA stability. Usually binds in the 5'-UTR at or near the Shine-Dalgarno sequence preventing ribosome-binding, thus repressing translation. Its main target seems to be the major flagellin gene, while its function is anatagonized by FliW. This Desulfotalea psychrophila (strain LSv54 / DSM 12343) protein is Translational regulator CsrA.